A 537-amino-acid polypeptide reads, in one-letter code: Probable protein kinase UbiB (537 aa).

The helical transmembrane segment at 30 to 47 threads the bilayer; it reads LLPWWLRALGYLLPWRWL. Residues 126–490 enclose the Protein kinase domain; it reads RFDSEPLASA…KRERHDHHLL (365 aa). ATP-binding positions include 132–140 and lysine 154; that span reads LASASVAQV. Aspartate 289 serves as the catalytic Proton acceptor. A run of 2 helical transmembrane segments spans residues 489-507 and 513-530; these read LLRL…LALQ and ANAW…YLLV.

This sequence belongs to the ABC1 family. UbiB subfamily.

The protein resides in the cell inner membrane. It participates in cofactor biosynthesis; ubiquinone biosynthesis [regulation]. Functionally, is probably a protein kinase regulator of UbiI activity which is involved in aerobic coenzyme Q (ubiquinone) biosynthesis. The sequence is that of Probable protein kinase UbiB from Azotobacter vinelandii (strain DJ / ATCC BAA-1303).